The sequence spans 65 residues: Large ribosomal subunit protein uL30 (65 aa).

Belongs to the universal ribosomal protein uL30 family. Part of the 50S ribosomal subunit.

The polypeptide is Large ribosomal subunit protein uL30 (Methylobacillus flagellatus (strain ATCC 51484 / DSM 6875 / VKM B-1610 / KT)).